Consider the following 361-residue polypeptide: MSDDDNSPISAREAKQLFAELKSAPALVLAVSGGPDSIALMWLAARWQRSLARGPRLTVVTVDHGLRAEAAREAREVKRLATELGLPHRTLRWRGAKPKTGLPAAAREARYRLLMQAARSAGASHVLTAHTRDDQAETLLMRLVRGSGLAGLSAMARLTERDGIVLARPLLDVPKAQLIATLKRAKIGFADDPTNRDTAFTRPRLRALLPQLAAEGGDARSLARLAARLARANAAVEVLTDGAERFLRLRDRDDAPHGPDMRSFEAGAFATLPEEVRLRMLLRAINALGHEGPAELGKVETLLAALDQAIAAGMAAAPRAAVNGRPVLKQTLAGALISLAGGRIQIAPAPARRRKGDRGGS.

S32–S37 is a binding site for ATP.

The protein belongs to the tRNA(Ile)-lysidine synthase family.

The protein localises to the cytoplasm. It catalyses the reaction cytidine(34) in tRNA(Ile2) + L-lysine + ATP = lysidine(34) in tRNA(Ile2) + AMP + diphosphate + H(+). Its function is as follows. Ligates lysine onto the cytidine present at position 34 of the AUA codon-specific tRNA(Ile) that contains the anticodon CAU, in an ATP-dependent manner. Cytidine is converted to lysidine, thus changing the amino acid specificity of the tRNA from methionine to isoleucine. The sequence is that of tRNA(Ile)-lysidine synthase from Bradyrhizobium diazoefficiens (strain JCM 10833 / BCRC 13528 / IAM 13628 / NBRC 14792 / USDA 110).